Here is a 352-residue protein sequence, read N- to C-terminus: Ion-translocating oxidoreductase complex subunit D (352 aa).

The next 5 membrane-spanning stretches (helical) occupy residues Ile20–Gly40, Gly42–Leu62, Ala78–Ala109, Pro123–Leu143, and Ile148–Ala168. FMN phosphoryl threonine is present on Thr187. A run of 5 helical transmembrane segments spans residues Ile214–Leu234, Trp242–Phe262, Leu267–Leu287, Leu301–Pro321, and Asp322–Thr342.

The protein belongs to the NqrB/RnfD family. In terms of assembly, the complex is composed of six subunits: RsxA, RsxB, RsxC, RsxD, RsxE and RsxG. Requires FMN as cofactor.

The protein resides in the cell inner membrane. Its function is as follows. Part of a membrane-bound complex that couples electron transfer with translocation of ions across the membrane. Required to maintain the reduced state of SoxR. The sequence is that of Ion-translocating oxidoreductase complex subunit D from Escherichia coli (strain SE11).